A 92-amino-acid polypeptide reads, in one-letter code: Small ribosomal subunit protein uS19 (92 aa).

The protein belongs to the universal ribosomal protein uS19 family.

Functionally, protein S19 forms a complex with S13 that binds strongly to the 16S ribosomal RNA. This Streptococcus thermophilus (strain ATCC BAA-491 / LMD-9) protein is Small ribosomal subunit protein uS19.